The primary structure comprises 405 residues: Pre-mRNA-splicing factor cwc-24 (405 aa).

Disordered regions lie at residues 1-114 and 162-184; these read MADT…NTIY and TKKK…DGTY. The segment covering 15–29 has biased composition (low complexity); it reads EPTTATPTAPIAPVA. The span at 31-46 shows a compositional bias: basic residues; that stretch reads FKKRGAKGKANLRKRP. The span at 56–70 shows a compositional bias: acidic residues; sequence SDDDSSDFESSEDEA. Over residues 74–83 the composition is skewed to basic residues; sequence RIKRRKKNHH. The C3H1-type zinc finger occupies 221 to 249; it reads DMAPDVCKDYKQTGFCGFGDNCKFLHARE. The RING-type zinc-finger motif lies at 310–349; that stretch reads CIICRGPYSNSPVVTRCGHYFCEACALKRYRKDPSCAACG. A compositionally biased stretch (basic and acidic residues) spans 370 to 386; sequence KARAERLRREARERGEE. A disordered region spans residues 370-405; the sequence is KARAERLRREARERGEEVSEEEDEGEDEGEGAEGSD. Positions 387–405 are enriched in acidic residues; that stretch reads VSEEEDEGEDEGEGAEGSD.

The protein belongs to the CWC24 family. As to quaternary structure, associated with the spliceosome.

It is found in the nucleus. In terms of biological role, involved in pre-mRNA splicing. The chain is Pre-mRNA-splicing factor cwc-24 (cwc-24) from Neurospora crassa (strain ATCC 24698 / 74-OR23-1A / CBS 708.71 / DSM 1257 / FGSC 987).